We begin with the raw amino-acid sequence, 307 residues long: Reaction center protein M chain (307 aa).

3 helical membrane passes run 52 to 78 (LGIA…WYQA), 110 to 139 (QGGV…ADQL), and 142 to 167 (GKHM…PILM). (7R,8Z)-bacteriochlorophyll b is bound by residues histidine 181 and histidine 201. Residues 197-225 (YNPFHGLSIAALYGSALLFAMHGATILAV) traverse the membrane as a helical segment. The Fe cation site is built by histidine 218 and glutamate 233. Tryptophan 251 provides a ligand contact to a ubiquinone. A helical membrane pass occupies residues 259 to 285 (ATMEGIHRWAIWMAVMVTLTGGIGILL). Position 265 (histidine 265) interacts with Fe cation.

This sequence belongs to the reaction center PufL/M/PsbA/D family. As to quaternary structure, reaction center is composed of four bacteriochlorophylls, two bacteriopheophytins, two ubiquinones, one iron, and three highly hydrophobic polypeptide chains (designated L, M, and H).

It is found in the cellular chromatophore membrane. The reaction center is a membrane-bound complex that mediates the initial photochemical event in the electron transfer process of photosynthesis. This chain is Reaction center protein M chain (pufM), found in Rhodobacter capsulatus (Rhodopseudomonas capsulata).